A 172-amino-acid polypeptide reads, in one-letter code: Small t antigen (172 aa).

The residue at position 1 (Met-1) is an N-acetylmethionine; by host. Residues 12–75 form the J domain; the sequence is ELMDLLGLER…VKVAHQPDFG (64 aa). A C4-type; atypical zinc finger spans residues 101–114; sequence CATKPSAHCPCMLC. An H1C3-type; atypical zinc finger spans residues 120 to 141; sequence HVYRKFLRRDPLVWIDCYCFDC.

As to quaternary structure, interacts with host PPP2R1A; the interaction inhibits PP2A activity.

It is found in the host cytoplasm. The protein resides in the host nucleus. Functionally, promotes efficient viral genome replication by accelerating both G1 and S phase progression of the cell cycle. Inhibits host PP2A by binding to the A subunit, thereby displacing lower affinity regulatory B subunit. Inactivation of PP2A in turn results in the transactivation of cyclin A and cyclin D1 promoters. Late during the infection cycle, ST may induce dephosphorylation of host MTOR, leading to the inhibition of cap-dependent translation. May establish and maintain high levels of viral genomes during persistent infection in cell culture. This chain is Small t antigen, found in Simian virus 12 (strain wt100) (SV-12).